The chain runs to 753 residues: Cytoplasmic polyadenylation element-binding protein 3 (753 aa).

Positions 111–286 (VGESTPSSAG…NGSWHGELPP (176 aa)) are disordered. 2 stretches are compositionally biased toward basic and acidic residues: residues 131–142 (KPTEKISVDEPP) and 175–188 (FGKE…EVVK). Residues 227 to 239 (SPAKISSNSSSSS) are compositionally biased toward low complexity. The span at 265–279 (SRQGLSNRDNLSNGS) shows a compositional bias: polar residues. The RRM domain maps to 298-320 (IFVGGVPWDITEAALKDSFGEFG). Residues 567–589 (KAYAGPHRRPHLTSNSLSKSHGC) form a disordered region. Residues 578 to 589 (LTSNSLSKSHGC) show a composition bias toward polar residues.

Cytoplasmic polyadenylation element binding protein that binds to and regulates the translation of specific mRNAs. This is Cytoplasmic polyadenylation element-binding protein 3 (cpb-3) from Caenorhabditis briggsae.